Consider the following 209-residue polypeptide: Kynurenine formamidase (209 aa).

Trp-20 lines the substrate pocket. His-50, His-54, and Asp-56 together coordinate Zn(2+). The active-site Proton donor/acceptor is the His-60. 2 residues coordinate Zn(2+): His-161 and Glu-173.

This sequence belongs to the Cyclase 1 superfamily. KynB family. Homodimer. Zn(2+) is required as a cofactor.

The enzyme catalyses N-formyl-L-kynurenine + H2O = L-kynurenine + formate + H(+). Its pathway is amino-acid degradation; L-tryptophan degradation via kynurenine pathway; L-kynurenine from L-tryptophan: step 2/2. Functionally, catalyzes the hydrolysis of N-formyl-L-kynurenine to L-kynurenine, the second step in the kynurenine pathway of tryptophan degradation. The polypeptide is Kynurenine formamidase (Bacillus mycoides (strain KBAB4) (Bacillus weihenstephanensis)).